We begin with the raw amino-acid sequence, 1587 residues long: Sister chromatid cohesion protein mis4 (1587 aa).

Positions 140 to 172 (PKEKPDASSINTNRSSSDNGFLTPSSSPRSPSC) are disordered. Over residues 147–162 (SSINTNRSSSDNGFLT) the composition is skewed to polar residues. The segment covering 163-172 (PSSSPRSPSC) has biased composition (low complexity). Ser-183 carries the phosphoserine modification. HEAT repeat units follow at residues 775–812 (LNLKFFVSLIIGFLDSPQASLRTKCLRIINQMKTIPSI), 814–851 (RTHPEVLAQIISKSNDQSAIVRDTVLDLLGTYIMAYRE), 853–888 (IPQIYGCIISGISDPSTIVRKRAIKQLCEVYEATED), 890–927 (NIRVDIASKLLTRSNDEEETISELSLEVLEKLWFSPAS), 1101–1140 (ATLMEIVPCLCSLFTRLNDYERLKKIVVSCLKSLEEARHS), and 1183–1220 (DAYVILLGYFQKLLKDAKGQLRIHIIDNMSRICLRETS).

It belongs to the SCC2/Nipped-B family. Interacts with ssl3.

The protein localises to the nucleus. Its subcellular location is the chromosome. Functionally, plays a structural role in chromatin. Chromatid cohesion molecule required for equal sister chromatid separation in anaphase. May form a stable link between chromatids in S phase that is split rather than removed in anaphase. Also required for spindle-kinetochore interaction in early mitosis and inhibit sister chromatid separation until the cleavage of Rad21 in anaphase. This Schizosaccharomyces pombe (strain 972 / ATCC 24843) (Fission yeast) protein is Sister chromatid cohesion protein mis4 (mis4).